The primary structure comprises 480 residues: Peptidase S41 family protein ustP (480 aa).

Positions 78–97 are disordered; sequence CMPNKKSRPPDPRPSLAVGK. Residues 134 to 336 form a peptidase S41 domain region; that stretch reads DVAVLQLPTF…LKQQGVRSIV (203 aa).

Belongs to the peptidase S41A family.

Its pathway is mycotoxin biosynthesis. Functionally, peptidase S41 family protein; part of the gene cluster that mediates the biosynthesis of the secondary metabolite ustiloxin B, an antimitotic tetrapeptide. First, ustA is processed by the subtilisin-like endoprotease Kex2 that is outside the ustiloxin B gene cluster, at the C-terminal side of Arg-Lys, after transfer to Golgi apparatus through the endoplasmic reticulum (ER). Cleavage by KEX2 generates 16 peptides YAIG-I to YAIG-XVI. To process the precursor peptide further, at least two peptidases are necessary to cleave the N-terminal and C-terminal sides of the Tyr-Ala-Ile-Gly core peptide which serves as backbone for the synthesis of ustiloxin B, through cyclization and modification of the tyrosine with a non-protein coding amino acid, norvaline. One of the two peptidases must be the serine peptidase ustP; and the other pepdidase is probably ustH. Macrocyclization of the core peptide derived from ustA requires the tyrosinase ustQ, as well as the homologous oxidases ustYa and ustYb, and leads to the production of the first cyclization product N-desmethylustiloxin F. For the formation of N-desmethylustiloxin F, three oxidation steps are required, hydroxylation at the benzylic position, hydroxylation at either the aromatic ring of Tyr or beta-position of Ile, and oxidative cyclization. UstQ may catalyze the oxidation of a phenol moiety, whereas the ustYa and ustYb are most likely responsible for the remaining two-step oxidations. N-desmethylustiloxin F is then methylated by ustM to yield ustiloxin F which in turn substrate of the cytochrome P450 monooxygenase ustC which catalyzes the formation of S-deoxyustiloxin H. The flavoprotein monooxygenases ustF1 and ustF2 then participate in the modification of the side chain of S-deoxyustiloxin H, leading to the synthesis of an oxime intermediate, via ustiloxin H. Finally, carboxylative dehydration performed by the cysteine desulfurase-like protein ustD yields ustiloxin B. This is Peptidase S41 family protein ustP from Aspergillus flavus (strain ATCC 200026 / FGSC A1120 / IAM 13836 / NRRL 3357 / JCM 12722 / SRRC 167).